We begin with the raw amino-acid sequence, 109 residues long: Small ribosomal subunit protein bS20 (109 aa).

This sequence belongs to the bacterial ribosomal protein bS20 family.

Binds directly to 16S ribosomal RNA. In Synechococcus sp. (strain JA-2-3B'a(2-13)) (Cyanobacteria bacterium Yellowstone B-Prime), this protein is Small ribosomal subunit protein bS20.